The chain runs to 341 residues: GTP-binding protein REM 2 (341 aa).

Acidic residues predominate over residues 1 to 13 (MHTDLDTDMDADT). Disordered regions lie at residues 1-72 (MHTD…SMPV) and 84-106 (VDEL…GSGE). Residues 18 to 32 (LCSSSSRQASPSGTP) show a composition bias toward polar residues. Ser27 bears the Phosphoserine mark. Residues 43–54 (QKPEKLLAELDR) are compositionally biased toward basic and acidic residues. The span at 94-105 (SSSGSSDSLGSG) shows a compositional bias: low complexity. GTP is bound by residues 122–129 (GESGVGKS), 230–233 (NKSD), and 261–262 (AA). Positions 282–309 (RGRGHAGGQRPEPSSPDGPAPPTRRESL) are disordered. Over residues 294–303 (PSSPDGPAPP) the composition is skewed to pro residues. A Phosphoserine modification is found at Ser296.

This sequence belongs to the small GTPase superfamily. RGK family. As to expression, expressed in brain and kidney.

Its subcellular location is the cell membrane. Functionally, binds GTP saturably and exhibits a low intrinsic rate of GTP hydrolysis. The polypeptide is GTP-binding protein REM 2 (Rem2) (Rattus norvegicus (Rat)).